A 229-amino-acid chain; its full sequence is Large ribosomal subunit protein uL1 (229 aa).

Belongs to the universal ribosomal protein uL1 family. Part of the 50S ribosomal subunit.

In terms of biological role, binds directly to 23S rRNA. The L1 stalk is quite mobile in the ribosome, and is involved in E site tRNA release. Protein L1 is also a translational repressor protein, it controls the translation of the L11 operon by binding to its mRNA. This chain is Large ribosomal subunit protein uL1, found in Streptococcus pneumoniae (strain Taiwan19F-14).